Reading from the N-terminus, the 236-residue chain is 2,3,4,5-tetrahydropyridine-2,6-dicarboxylate N-acetyltransferase (236 aa).

This sequence belongs to the transferase hexapeptide repeat family. DapH subfamily.

The catalysed reaction is (S)-2,3,4,5-tetrahydrodipicolinate + acetyl-CoA + H2O = L-2-acetamido-6-oxoheptanedioate + CoA. The protein operates within amino-acid biosynthesis; L-lysine biosynthesis via DAP pathway; LL-2,6-diaminopimelate from (S)-tetrahydrodipicolinate (acetylase route): step 1/3. In terms of biological role, catalyzes the transfer of an acetyl group from acetyl-CoA to tetrahydrodipicolinate. This is 2,3,4,5-tetrahydropyridine-2,6-dicarboxylate N-acetyltransferase from Limosilactobacillus reuteri (strain DSM 20016) (Lactobacillus reuteri).